A 330-amino-acid chain; its full sequence is Methionyl-tRNA formyltransferase (330 aa).

Position 121 to 124 (121 to 124) interacts with (6S)-5,6,7,8-tetrahydrofolate; it reads SLLP.

The protein belongs to the Fmt family.

The enzyme catalyses L-methionyl-tRNA(fMet) + (6R)-10-formyltetrahydrofolate = N-formyl-L-methionyl-tRNA(fMet) + (6S)-5,6,7,8-tetrahydrofolate + H(+). In terms of biological role, attaches a formyl group to the free amino group of methionyl-tRNA(fMet). The formyl group appears to play a dual role in the initiator identity of N-formylmethionyl-tRNA by promoting its recognition by IF2 and preventing the misappropriation of this tRNA by the elongation apparatus. This is Methionyl-tRNA formyltransferase from Burkholderia cenocepacia (strain HI2424).